Here is a 231-residue protein sequence, read N- to C-terminus: Aquaporin Z (231 aa).

Helical transmembrane passes span 9-29 (CFGTFWLVFGGCGSAVLAAGF) and 34-54 (IGFAGVALAFGLTVLTMAFAV). Positions 63-65 (NPA) match the NPA 1 motif. 3 consecutive transmembrane segments (helical) span residues 82 to 102 (VGYVIAQVVGGIVAAALLYLI), 129 to 149 (YSMLSALVVELVLSAGFLLVI), and 156 to 176 (FAPAGFAPIAIGLALTLIHLI). Residues 186 to 188 (NPA) carry the NPA 2 motif. A helical membrane pass occupies residues 202–222 (LEQLWFFWVVPIVGGIIGGLI).

This sequence belongs to the MIP/aquaporin (TC 1.A.8) family. In terms of assembly, homotetramer.

The protein resides in the cell inner membrane. It catalyses the reaction H2O(in) = H2O(out). In terms of biological role, channel that permits osmotically driven movement of water in both directions. It is involved in the osmoregulation and in the maintenance of cell turgor during volume expansion in rapidly growing cells. It mediates rapid entry or exit of water in response to abrupt changes in osmolarity. This Escherichia coli O157:H7 protein is Aquaporin Z.